The chain runs to 308 residues: MAEKSKVLIIGGTGYIGKFVVEASAKSGHPTFALVRESTLSDPVKSKIVENFKNLGVTILHGDLYDHESLVKAIKQVDVVISTMGMMQLGDQVKLIAAIKEAGNIKRFFPSEFGMDVDKTNAVEPAKSAFAVKVQIRRAIEAEGIPYTYVSCNCFAGYFLPTMVQPGATVPPRDKVIIPGDGNVKAVFNEEHDIGTYTIKAVDDPRTLNKTLYIKPPKNTLSFNELVAMWEKMIGKTLEKIYIPEEQILKDIETSPMPLPVILAINHATFVKGDQTNFKIEPSFGVEASELYPDVKYTTVEDYLGHFV.

NADP(+)-binding positions include 11 to 17 (GGTGYIG), Arg-36, and Lys-45. Lys-133 acts as the Proton acceptor in catalysis. An NADP(+)-binding site is contributed by Arg-137.

This sequence belongs to the NmrA-type oxidoreductase family. Isoflavone reductase subfamily. In terms of tissue distribution, expressed in flowers. Expressed at low levels in stems.

It catalyses the reaction (-)-dehydrodiconiferyl alcohol + NADPH + H(+) = (S)-isodihydrodehydrodiconiferyl alcohol + NADP(+). The enzyme catalyses (+)-dehydrodiconiferyl alcohol + NADPH + H(+) = (R)-isodihydrodehydrodiconiferyl alcohol + NADP(+). It carries out the reaction (2R,3S)-dihydrodehydrodiconiferyl alcohol + NADPH + H(+) = (S)-tetrahydrodehydrodiconiferyl alcohol + NADP(+). The catalysed reaction is (2S,3R)-dihydrodehydrodiconiferyl alcohol + NADPH + H(+) = (R)-tetrahydrodehydrodiconiferyl alcohol + NADP(+). Functionally, oxidoreductase involved in lignan biosynthesis. Catalyzes the NADPH-dependent reduction of phenylcoumaran benzylic ethers. Converts dehydrodiconiferyl alcohol (DDC) to isodihydrodehydrodiconiferyl alcohol (IDDDC), and dihydrodehydrodiconiferyl alcohol (DDDC) to tetrahydrodehydrodiconiferyl alcohol (TDDC). The protein is Phenylcoumaran benzylic ether reductase TP7 of Nicotiana tabacum (Common tobacco).